Here is a 533-residue protein sequence, read N- to C-terminus: Probable dolichyl pyrophosphate Man9GlcNAc2 alpha-1,3-glucosyltransferase (533 aa).

Positions 1–20 (MPKKKPAKHSGEDDITIPVS) are disordered. The next 9 helical transmembrane spans lie at 42–64 (FLCISLFALLIRSAVTMYPYSGA), 149–169 (WTVLSSDAFIFFPAALFFVLV), 184–204 (WHIAMILLNPCLILIDHGHFQ), 214–234 (VGAIAAVLCESEVLTCVLFSL), 264–284 (ILSVIKLGIAVIVTFVIFWWP), 360–380 (GFLYGLLNSSMAFYLFSFQVH), 422–442 (LLIPYLTLSFLFTVIYHSPGN), 463–483 (VFLLRTHFFISVVLHVLYLTI), and 491–511 (FLFEALIMILCFSYFIMFAFY).

It belongs to the ALG6/ALG8 glucosyltransferase family.

The protein localises to the endoplasmic reticulum membrane. The enzyme catalyses an alpha-D-Man-(1-&gt;2)-alpha-D-Man-(1-&gt;2)-alpha-D-Man-(1-&gt;3)-[alpha-D-Man-(1-&gt;2)-alpha-D-Man-(1-&gt;3)-[alpha-D-Man-(1-&gt;2)-alpha-D-Man-(1-&gt;6)]-alpha-D-Man-(1-&gt;6)]-beta-D-Man-(1-&gt;4)-beta-D-GlcNAc-(1-&gt;4)-alpha-D-GlcNAc-diphospho-di-trans,poly-cis-dolichol + a di-trans,poly-cis-dolichyl beta-D-glucosyl phosphate = an alpha-D-Glc-(1-&gt;3)-alpha-D-Man-(1-&gt;2)-alpha-D-Man-(1-&gt;2)-alpha-D-Man-(1-&gt;3)-[alpha-D-Man-(1-&gt;2)-alpha-D-Man-(1-&gt;3)-[alpha-D-Man-(1-&gt;2)-alpha-D-Man-(1-&gt;6)]-alpha-D-Man-(1-&gt;6)]-beta-D-Man-(1-&gt;4)-beta-D-GlcNAc-(1-&gt;4)-alpha-D-GlcNAc-diphospho-di-trans,poly-cis-dolichol + a di-trans,poly-cis-dolichyl phosphate + H(+). It functions in the pathway protein modification; protein glycosylation. Adds the first glucose residue to the lipid-linked oligosaccharide precursor for N-linked glycosylation. Transfers glucose from dolichyl phosphate glucose (Dol-P-Glc) onto the lipid-linked oligosaccharide Man(9)GlcNAc(2)-PP-Dol. This Arabidopsis thaliana (Mouse-ear cress) protein is Probable dolichyl pyrophosphate Man9GlcNAc2 alpha-1,3-glucosyltransferase.